A 207-amino-acid chain; its full sequence is Large ribosomal subunit protein uL4 (207 aa).

The protein belongs to the universal ribosomal protein uL4 family. Part of the 50S ribosomal subunit.

In terms of biological role, one of the primary rRNA binding proteins, this protein initially binds near the 5'-end of the 23S rRNA. It is important during the early stages of 50S assembly. It makes multiple contacts with different domains of the 23S rRNA in the assembled 50S subunit and ribosome. Forms part of the polypeptide exit tunnel. This Rickettsia peacockii (strain Rustic) protein is Large ribosomal subunit protein uL4.